The following is a 397-amino-acid chain: Elongation factor Tu (397 aa).

Residues 10–207 (LPHVNVGTIG…TLDSYIPEPV (198 aa)) form the tr-type G domain. A G1 region spans residues 19–26 (GHVDHGKT). 19–26 (GHVDHGKT) serves as a coordination point for GTP. T26 contacts Mg(2+). Residues 60 to 64 (GITIN) form a G2 region. The G3 stretch occupies residues 81-84 (DCPG). Residues 81–85 (DCPGH) and 136–139 (NKAD) contribute to the GTP site. Positions 136 to 139 (NKAD) are G4. Positions 174–176 (SAR) are G5.

This sequence belongs to the TRAFAC class translation factor GTPase superfamily. Classic translation factor GTPase family. EF-Tu/EF-1A subfamily. As to quaternary structure, monomer.

The protein localises to the cytoplasm. It carries out the reaction GTP + H2O = GDP + phosphate + H(+). In terms of biological role, GTP hydrolase that promotes the GTP-dependent binding of aminoacyl-tRNA to the A-site of ribosomes during protein biosynthesis. In Pseudomonas putida (strain ATCC 700007 / DSM 6899 / JCM 31910 / BCRC 17059 / LMG 24140 / F1), this protein is Elongation factor Tu.